A 316-amino-acid chain; its full sequence is Zinc finger protein 330 (316 aa).

Residues 1–24 (MPKKKTGARKKAENRREREKQLRA) form a disordered region. Positions 3–11 (KKKTGARKK) match the Nuclear localization signal motif. A compositionally biased stretch (basic and acidic residues) spans 10–22 (KKAENRREREKQL). C4-type zinc fingers lie at residues 42 to 58 (CDKCQRRQKNRAFCYFC), 67 to 104 (CAQCGKTKCMMKSSDCVIKHAGVYSTGLAMVGAICDFC), 129 to 149 (CVECERGVWDHGGRIFSCSFC), and 175 to 189 (CVSCNRLGQHSCLRC). Residues 227–299 (SMSTRSLKFG…ESSDLFNNLN (73 aa)) form a disordered region. The span at 268–291 (DDDEEEDEAEDEEEEDGKDSDAES) shows a compositional bias: acidic residues. Position 287 is a phosphoserine (S287).

It belongs to the NOA36 family.

The protein resides in the nucleus. It is found in the nucleolus. The protein localises to the chromosome. It localises to the centromere. In Mus musculus (Mouse), this protein is Zinc finger protein 330 (Znf330).